Consider the following 209-residue polypeptide: Orotate phosphoribosyltransferase (209 aa).

5-phospho-alpha-D-ribose 1-diphosphate-binding positions include Arg-96, Lys-100, His-102, and 122-130 (EDLISTGGS). Ser-126 serves as a coordination point for orotate.

Belongs to the purine/pyrimidine phosphoribosyltransferase family. PyrE subfamily. Homodimer. Mg(2+) is required as a cofactor.

The enzyme catalyses orotidine 5'-phosphate + diphosphate = orotate + 5-phospho-alpha-D-ribose 1-diphosphate. It participates in pyrimidine metabolism; UMP biosynthesis via de novo pathway; UMP from orotate: step 1/2. Functionally, catalyzes the transfer of a ribosyl phosphate group from 5-phosphoribose 1-diphosphate to orotate, leading to the formation of orotidine monophosphate (OMP). The sequence is that of Orotate phosphoribosyltransferase from Streptococcus agalactiae serotype III (strain NEM316).